Here is a 130-residue protein sequence, read N- to C-terminus: Fluoride-specific ion channel FluC (130 aa).

The next 4 helical transmembrane spans lie at 3–23 (FVFLWAALGGAIGSSLRYFVG), 38–58 (LGTFSVNIIGCFVIGFMGHLA), 67–87 (FGIFFVTGVLGGFTTFSSYGL), and 102–122 (ISYVLGTNLLGLIGVAIGWFL). Na(+) contacts are provided by glycine 77 and threonine 80.

The protein belongs to the fluoride channel Fluc/FEX (TC 1.A.43) family.

Its subcellular location is the cell inner membrane. The enzyme catalyses fluoride(in) = fluoride(out). Its activity is regulated as follows. Na(+) is not transported, but it plays an essential structural role and its presence is essential for fluoride channel function. Functionally, fluoride-specific ion channel. Important for reducing fluoride concentration in the cell, thus reducing its toxicity. This chain is Fluoride-specific ion channel FluC, found in Helicobacter pylori (strain G27).